A 123-amino-acid chain; its full sequence is Translation initiation factor 1A (123 aa).

Residues 1–11 (MSPDKTEDEDK) show a composition bias toward acidic residues. A disordered region spans residues 1–26 (MSPDKTEDEDKDVNVDQDQFNEEEES). Positions 28–102 (GRVILPNKKK…EKADVVYRYT (75 aa)) constitute an S1-like domain.

This sequence belongs to the eIF-1A family.

Its function is as follows. Seems to be required for maximal rate of protein biosynthesis. Enhances ribosome dissociation into subunits and stabilizes the binding of the initiator Met-tRNA(I) to 40 S ribosomal subunits. This chain is Translation initiation factor 1A (eIF1A), found in Thermoplasma volcanium (strain ATCC 51530 / DSM 4299 / JCM 9571 / NBRC 15438 / GSS1).